A 266-amino-acid polypeptide reads, in one-letter code: Cyclin-C (266 aa).

The 105-residue stretch at 47–151 folds into the Cyclin N-terminal domain; sequence IIQVLGEQLK…LLENLDCCLI (105 aa).

Belongs to the cyclin family. Cyclin C subfamily. In terms of assembly, component of the Cdk8 module of the Mediator complex.

The protein resides in the nucleus. In terms of biological role, component of the Mediator complex, a coactivator involved in regulated gene transcription of nearly all RNA polymerase II-dependent genes. Mediator functions as a bridge to convey information from gene-specific regulatory proteins to the basal RNA polymerase II transcription machinery. Mediator is recruited to promoters by direct interactions with regulatory proteins and serves as a scaffold for the assembly of a functional preinitiation complex with RNA polymerase II and the general transcription factors. Binds to and activates cyclin-dependent kinase Cdk8 that phosphorylates the CTD (C-terminal domain) of the large subunit of RNA polymerase II (RNAp II), which may inhibit the formation of a transcription initiation complex. This chain is Cyclin-C (CycC), found in Anopheles gambiae (African malaria mosquito).